We begin with the raw amino-acid sequence, 202 residues long: NAD(P)H dehydrogenase (quinone) (202 aa).

Residues 7 to 193 enclose the Flavodoxin-like domain; it reads VLVLYYSMYG…TIARFQGRHF (187 aa). FMN-binding positions include 13-18 and 82-84; these read SMYGHI and TRF. Tyr15 contributes to the NAD(+) binding site. Trp102 lines the substrate pocket. FMN is bound by residues 117–122 and His137; that span reads STATGG.

The protein belongs to the WrbA family. FMN is required as a cofactor.

The enzyme catalyses a quinone + NADH + H(+) = a quinol + NAD(+). It carries out the reaction a quinone + NADPH + H(+) = a quinol + NADP(+). This chain is NAD(P)H dehydrogenase (quinone), found in Rhodospirillum rubrum (strain ATCC 11170 / ATH 1.1.1 / DSM 467 / LMG 4362 / NCIMB 8255 / S1).